An 828-amino-acid chain; its full sequence is Fibroblast growth factor receptor 4 (828 aa).

The N-terminal stretch at Met1–Cys31 is a signal peptide. At Arg32–Asp392 the chain is on the extracellular side. The Ig-like C2-type 1 domain maps to Pro33–Ser127. The cysteines at positions 67 and 112 are disulfide-linked. Asn70 is a glycosylation site (N-linked (GlcNAc...) asparagine). The disordered stretch occupies residues Leu132 to Ala156. Residues Gly135–Glu147 are compositionally biased toward acidic residues. 2 Ig-like C2-type domains span residues Pro169 to Thr259 and Pro272 to Thr372. A disulfide bridge connects residues Cys194 and Cys247. Residues Asn244, Asn281, Asn313, and Asn345 are each glycosylated (N-linked (GlcNAc...) asparagine). An intrachain disulfide couples Cys294 to Cys356. Residues Ile393–Cys413 form a helical membrane-spanning segment. Residues Arg414–Thr828 lie on the Cytoplasmic side of the membrane. The Protein kinase domain occupies Leu490 to Leu777. ATP contacts are provided by residues Leu496–Val504 and Lys526. The active-site Proton acceptor is Asp635. Tyr665, Tyr666, and Tyr776 each carry phosphotyrosine; by autocatalysis.

Belongs to the protein kinase superfamily. Tyr protein kinase family. Fibroblast growth factor receptor subfamily. In terms of processing, ubiquitinated. Subject to proteasomal degradation when not fully glycosylated. Post-translationally, autophosphorylated. Binding of FGF family members together with heparan sulfate proteoglycan or heparin promotes receptor dimerization and autophosphorylation on tyrosine residues. Autophosphorylation occurs in trans between the two FGFR molecules present in the dimer.

It localises to the cell membrane. It is found in the endosome. Its subcellular location is the endoplasmic reticulum. It catalyses the reaction L-tyrosyl-[protein] + ATP = O-phospho-L-tyrosyl-[protein] + ADP + H(+). With respect to regulation, present in an inactive conformation in the absence of bound ligand. Ligand binding leads to dimerization and activation by autophosphorylation on tyrosine residues. Functionally, tyrosine-protein kinase that acts as a cell-surface receptor for fibroblast growth factors and plays a role in the regulation of cell proliferation, differentiation and migration, and in regulation of lipid metabolism, bile acid biosynthesis, glucose uptake, vitamin D metabolism and phosphate homeostasis. Required for normal down-regulation of the expression of CYP7A1, the rate-limiting enzyme in bile acid synthesis, in response to FGF19. Phosphorylates PLCG1 and FRS2. Ligand binding leads to the activation of several signaling cascades. Activation of PLCG1 leads to the production of the cellular signaling molecules diacylglycerol and inositol 1,4,5-trisphosphate. Phosphorylation of FRS2 triggers recruitment of GRB2, GAB1, PIK3R1 and SOS1, and mediates activation of RAS, MAPK1/ERK2, MAPK3/ERK1 and the MAP kinase signaling pathway, as well as of the AKT1 signaling pathway. This chain is Fibroblast growth factor receptor 4 (fgfr4), found in Xenopus laevis (African clawed frog).